The primary structure comprises 344 residues: MVKIGIIGATGYVGAELLRLLLSHPKVEVAALSSVSFEGQEISNIYKNFLSKTNLICESAHDVVEKCDVIFTALPHGLSEDIAKKALDNKKVCIDMGADFRLSSEKEYEKWYGKKFTQPEIHTESVYGLPELNRDKIKECSLIANPGCYPTTIELGLMPLLKNSLIKLDNIICDSKSGTTGAGRGLTLNTHFPEENETFAPYKVGAHRHTPEIEETLSSMAEDNVNVTFTPHLLPINRGIVSTIYCIPRDKVNLEEIHKLYTEFYKDERFVNVLPLGDTASIKNVRLTNDCHISLHLNHREDQIIIISTIDNMIKGAAGQAIQNMNIILGFNEAEGLNLIAPAF.

Residue Cys148 is part of the active site.

Belongs to the NAGSA dehydrogenase family. Type 1 subfamily.

It is found in the cytoplasm. It carries out the reaction N-acetyl-L-glutamate 5-semialdehyde + phosphate + NADP(+) = N-acetyl-L-glutamyl 5-phosphate + NADPH + H(+). It participates in amino-acid biosynthesis; L-arginine biosynthesis; N(2)-acetyl-L-ornithine from L-glutamate: step 3/4. In terms of biological role, catalyzes the NADPH-dependent reduction of N-acetyl-5-glutamyl phosphate to yield N-acetyl-L-glutamate 5-semialdehyde. The chain is N-acetyl-gamma-glutamyl-phosphate reductase from Clostridium beijerinckii (strain ATCC 51743 / NCIMB 8052) (Clostridium acetobutylicum).